A 303-amino-acid polypeptide reads, in one-letter code: Uricase (303 aa).

Residue A2 is modified to N-acetylalanine. Residues K10 and K23 each carry the N6-acetyllysine; alternate modification. K10 and K23 each carry N6-succinyllysine; alternate. Catalysis depends on K23, which acts as the Charge relay system. An N6-acetyllysine mark is found at K27 and K36. Phosphoserine occurs at positions 39 and 63. The active-site Charge relay system is T68. 2 residues coordinate urate: T68 and D69. Residues K118, K122, and K164 each carry the N6-acetyllysine modification. A urate-binding site is contributed by F170. Residues K175 and K185 each carry the N6-acetyllysine modification. Position 187 (R187) interacts with urate. K220 carries the N6-acetyllysine; alternate modification. K220 carries the N6-succinyllysine; alternate modification. The residue at position 231 (S231) is a Phosphoserine. Urate is bound by residues V234, Q235, and N261. Residue H263 is the Charge relay system of the active site. N6-acetyllysine is present on K277. Y288 is subject to Phosphotyrosine. The Microbody targeting signal signature appears at S301–L303.

Belongs to the uricase family. As to expression, expressed in liver. Not detected in other tissues tested.

The protein resides in the peroxisome. It carries out the reaction urate + O2 + H2O = 5-hydroxyisourate + H2O2. Its pathway is purine metabolism; urate degradation; (S)-allantoin from urate: step 1/3. With respect to regulation, competitively inhibited by xanthine. Catalyzes the oxidation of uric acid to 5-hydroxyisourate, which is further processed to form (S)-allantoin. The polypeptide is Uricase (Uox) (Rattus norvegicus (Rat)).